The primary structure comprises 361 residues: Holliday junction branch migration complex subunit RuvB (361 aa).

Composition is skewed to polar residues over residues 1–15 (MAIKRSGNNNLSPNV) and 28–40 (ERSTSPELEQQEA). The interval 1–41 (MAIKRSGNNNLSPNVKSDLLSPEVIPQERSTSPELEQQEAS) is disordered. The segment at 13-203 (PNVKSDLLSP…FGLIQRLRFY (191 aa)) is large ATPase domain (RuvB-L). ATP is bound by residues leucine 42, arginine 43, glycine 84, lysine 87, threonine 88, threonine 89, 150–152 (EDF), arginine 193, tyrosine 203, and arginine 240. Residue threonine 88 participates in Mg(2+) binding. Positions 204–274 (EVDELQQIIL…LASEALDLYQ (71 aa)) are small ATPAse domain (RuvB-S). The interval 277-361 (KRGLDWTDRL…PTPLLPWKES (85 aa)) is head domain (RuvB-H). DNA is bound by residues arginine 332 and arginine 337.

The protein belongs to the RuvB family. As to quaternary structure, homohexamer. Forms an RuvA(8)-RuvB(12)-Holliday junction (HJ) complex. HJ DNA is sandwiched between 2 RuvA tetramers; dsDNA enters through RuvA and exits via RuvB. An RuvB hexamer assembles on each DNA strand where it exits the tetramer. Each RuvB hexamer is contacted by two RuvA subunits (via domain III) on 2 adjacent RuvB subunits; this complex drives branch migration. In the full resolvosome a probable DNA-RuvA(4)-RuvB(12)-RuvC(2) complex forms which resolves the HJ.

It is found in the cytoplasm. The catalysed reaction is ATP + H2O = ADP + phosphate + H(+). The RuvA-RuvB-RuvC complex processes Holliday junction (HJ) DNA during genetic recombination and DNA repair, while the RuvA-RuvB complex plays an important role in the rescue of blocked DNA replication forks via replication fork reversal (RFR). RuvA specifically binds to HJ cruciform DNA, conferring on it an open structure. The RuvB hexamer acts as an ATP-dependent pump, pulling dsDNA into and through the RuvAB complex. RuvB forms 2 homohexamers on either side of HJ DNA bound by 1 or 2 RuvA tetramers; 4 subunits per hexamer contact DNA at a time. Coordinated motions by a converter formed by DNA-disengaged RuvB subunits stimulates ATP hydrolysis and nucleotide exchange. Immobilization of the converter enables RuvB to convert the ATP-contained energy into a lever motion, pulling 2 nucleotides of DNA out of the RuvA tetramer per ATP hydrolyzed, thus driving DNA branch migration. The RuvB motors rotate together with the DNA substrate, which together with the progressing nucleotide cycle form the mechanistic basis for DNA recombination by continuous HJ branch migration. Branch migration allows RuvC to scan DNA until it finds its consensus sequence, where it cleaves and resolves cruciform DNA. In terms of biological role, participates in UV-tolerance of Synechocystis PCC 6803. The protein is Holliday junction branch migration complex subunit RuvB of Synechocystis sp. (strain ATCC 27184 / PCC 6803 / Kazusa).